The following is a 215-amino-acid chain: MSGYFITFEGGEGVGKTTQIFLLAQHLYGKGYDVLTTREPGGTAGAEVIRHILLSGQVQQHYGPLIEAILFTAARIDHVSEVIMPSLQKGKVVLCDRFIDSTRVYQGLNDKVSSSTLAVLECLALNKIKPQITFLLDIPARCSMKRANLRREKAETIDYFEKDELKIQEQRRQAFLQLAKQEPHRFRVIDGTDTVEVIAQQIRDICDQVMLDQLP.

Residue 10 to 17 coordinates ATP; it reads GGEGVGKT.

Belongs to the thymidylate kinase family.

The enzyme catalyses dTMP + ATP = dTDP + ADP. Its function is as follows. Phosphorylation of dTMP to form dTDP in both de novo and salvage pathways of dTTP synthesis. This is Thymidylate kinase from Bartonella henselae (strain ATCC 49882 / DSM 28221 / CCUG 30454 / Houston 1) (Rochalimaea henselae).